Here is a 377-residue protein sequence, read N- to C-terminus: Geranylgeranyl transferase type-1 subunit beta (377 aa).

PFTB repeat units lie at residues K144–N186, M193–G234, L245–K284, and F291–E333. Geranylgeranyl diphosphate contacts are provided by residues H219 to G221 and R263 to K266. 2 residues coordinate Zn(2+): D269 and C271. Position 272 to 275 (Y272 to W275) interacts with geranylgeranyl diphosphate. Residue H321 coordinates Zn(2+).

This sequence belongs to the protein prenyltransferase subunit beta family. Heterodimer of FNTA and PGGT1B. PGGT1B mediates interaction with substrate peptides. Requires Zn(2+) as cofactor. The cofactor is Mg(2+).

It carries out the reaction geranylgeranyl diphosphate + L-cysteinyl-[protein] = S-geranylgeranyl-L-cysteinyl-[protein] + diphosphate. In terms of biological role, catalyzes the transfer of a geranyl-geranyl moiety from geranyl-geranyl pyrophosphate to a cysteine at the fourth position from the C-terminus of proteins having the C-terminal sequence Cys-aliphatic-aliphatic-X. Known substrates include RAC1, RAC2, RAP1A and RAP1B. The sequence is that of Geranylgeranyl transferase type-1 subunit beta (PGGT1B) from Bos taurus (Bovine).